Consider the following 425-residue polypeptide: UDP-N-acetylglucosamine 1-carboxyvinyltransferase (425 aa).

22 to 23 (KN) is a binding site for phosphoenolpyruvate. R91 contributes to the UDP-N-acetyl-alpha-D-glucosamine binding site. C115 serves as the catalytic Proton donor. C115 carries the 2-(S-cysteinyl)pyruvic acid O-phosphothioketal modification. UDP-N-acetyl-alpha-D-glucosamine is bound by residues 120–124 (RPVDL), D309, and I331.

Belongs to the EPSP synthase family. MurA subfamily.

The protein localises to the cytoplasm. It catalyses the reaction phosphoenolpyruvate + UDP-N-acetyl-alpha-D-glucosamine = UDP-N-acetyl-3-O-(1-carboxyvinyl)-alpha-D-glucosamine + phosphate. Its pathway is cell wall biogenesis; peptidoglycan biosynthesis. Its function is as follows. Cell wall formation. Adds enolpyruvyl to UDP-N-acetylglucosamine. In Akkermansia muciniphila (strain ATCC BAA-835 / DSM 22959 / JCM 33894 / BCRC 81048 / CCUG 64013 / CIP 107961 / Muc), this protein is UDP-N-acetylglucosamine 1-carboxyvinyltransferase.